The following is a 317-amino-acid chain: Probable cell division protein WhiA (317 aa).

A DNA-binding region (H-T-H motif) is located at residues 275–308; sequence SLKELGEMLVPKVGKSGVNHRMRKIDELAEKLEE.

It belongs to the WhiA family.

In terms of biological role, involved in cell division and chromosome segregation. This chain is Probable cell division protein WhiA, found in Desulfitobacterium hafniense (strain Y51).